An 84-amino-acid chain; its full sequence is MTDKIRTLQGRVVSDKMEKSMVVAIERFVKHPLYGKFIKRTTKLHVHDENNECGIGDVVEIRECRPLSKTKSWTLVRVVEKAIL.

This sequence belongs to the universal ribosomal protein uS17 family. Part of the 30S ribosomal subunit.

In terms of biological role, one of the primary rRNA binding proteins, it binds specifically to the 5'-end of 16S ribosomal RNA. The sequence is that of Small ribosomal subunit protein uS17 from Pectobacterium atrosepticum (strain SCRI 1043 / ATCC BAA-672) (Erwinia carotovora subsp. atroseptica).